The sequence spans 313 residues: Ribosomal RNA small subunit methyltransferase H (313 aa).

S-adenosyl-L-methionine contacts are provided by residues 35 to 37 (GGH), D55, F80, D102, and Q109.

Belongs to the methyltransferase superfamily. RsmH family.

The protein localises to the cytoplasm. The enzyme catalyses cytidine(1402) in 16S rRNA + S-adenosyl-L-methionine = N(4)-methylcytidine(1402) in 16S rRNA + S-adenosyl-L-homocysteine + H(+). Specifically methylates the N4 position of cytidine in position 1402 (C1402) of 16S rRNA. The protein is Ribosomal RNA small subunit methyltransferase H of Shewanella baltica (strain OS223).